Consider the following 304-residue polypeptide: Glutaminase (304 aa).

Positions 63, 114, 158, 165, 189, 240, and 258 each coordinate substrate.

It belongs to the glutaminase family. As to quaternary structure, homotetramer.

It carries out the reaction L-glutamine + H2O = L-glutamate + NH4(+). This chain is Glutaminase, found in Shewanella baltica (strain OS185).